We begin with the raw amino-acid sequence, 489 residues long: Rhamnulokinase (489 aa).

13–17 contacts ATP; it reads ASSGR. Cys68 and Cys222 form a disulfide bridge. Residues Gly83 and 236-238 contribute to the substrate site; that span reads HDT. Residue Asp237 is the Proton acceptor of the active site. Thr259 contacts ATP. Asn296 is a substrate binding site. Gln304 serves as a coordination point for ATP. An intrachain disulfide couples Cys353 to Cys370. Gly402 serves as a coordination point for ATP. Residues Cys413 and Cys417 are joined by a disulfide bond.

It belongs to the rhamnulokinase family. The cofactor is Mg(2+).

It carries out the reaction L-rhamnulose + ATP = L-rhamnulose 1-phosphate + ADP + H(+). It participates in carbohydrate degradation; L-rhamnose degradation; glycerone phosphate from L-rhamnose: step 2/3. Functionally, involved in the catabolism of L-rhamnose (6-deoxy-L-mannose). Catalyzes the transfer of the gamma-phosphate group from ATP to the 1-hydroxyl group of L-rhamnulose to yield L-rhamnulose 1-phosphate. The sequence is that of Rhamnulokinase from Shigella sonnei (strain Ss046).